Consider the following 420-residue polypeptide: 3-phosphoshikimate 1-carboxyvinyltransferase (420 aa).

K20, S21, and R25 together coordinate 3-phosphoshikimate. K20 serves as a coordination point for phosphoenolpyruvate. R119 is a phosphoenolpyruvate binding site. S161, S162, Q163, S189, D303, Q326, and K330 together coordinate 3-phosphoshikimate. A phosphoenolpyruvate-binding site is contributed by Q163. Residue D303 is the Proton acceptor of the active site. 3 residues coordinate phosphoenolpyruvate: R334, R375, and K400.

The protein belongs to the EPSP synthase family. Monomer.

It is found in the cytoplasm. The catalysed reaction is 3-phosphoshikimate + phosphoenolpyruvate = 5-O-(1-carboxyvinyl)-3-phosphoshikimate + phosphate. It functions in the pathway metabolic intermediate biosynthesis; chorismate biosynthesis; chorismate from D-erythrose 4-phosphate and phosphoenolpyruvate: step 6/7. Catalyzes the transfer of the enolpyruvyl moiety of phosphoenolpyruvate (PEP) to the 5-hydroxyl of shikimate-3-phosphate (S3P) to produce enolpyruvyl shikimate-3-phosphate and inorganic phosphate. This chain is 3-phosphoshikimate 1-carboxyvinyltransferase, found in Dehalococcoides mccartyi (strain ATCC BAA-2266 / KCTC 15142 / 195) (Dehalococcoides ethenogenes (strain 195)).